A 258-amino-acid chain; its full sequence is F-box/SPRY domain-containing protein 1 (258 aa).

One can recognise an F-box domain in the interval 6-54 (TEYAPDIPDNVLELIFSYLKLQDLRNCALVCKSWHRFLSDENNEVWRAQ). The region spanning 64 to 256 (FKTDLLSVVP…ISMVYLGPPL (193 aa)) is the B30.2/SPRY domain.

This sequence belongs to the FBXO45/Fsn family. In terms of assembly, component of an E3 ubiquitin ligase complex composed of hiw and Fsn.

It localises to the synapse. The protein operates within protein modification; protein ubiquitination. Required in the presynaptic motoneuron to down-regulate the levels of wnd and restrain synaptic terminal growth at the neuromuscular junction (NMJ). The chain is F-box/SPRY domain-containing protein 1 from Culex quinquefasciatus (Southern house mosquito).